The chain runs to 424 residues: uncharacterized protein (424 aa).

The next 11 membrane-spanning stretches (helical) occupy residues 9 to 29 (ITWI…GILI), 41 to 61 (ASLF…GTLA), 86 to 106 (GAIL…IIAL), 119 to 139 (ADWQ…LLHM), 148 to 168 (ISTL…AVSL), 184 to 204 (WSAA…WEMI), 222 to 242 (LFLA…VTVG), 270 to 290 (VTVC…IAGF), 320 to 340 (VLTA…LFQI), 345 to 365 (LLKG…AAAL), and 377 to 397 (MALG…WALL).

The protein belongs to the amino acid-polyamine-organocation (APC) superfamily.

It localises to the cell membrane. This is an uncharacterized protein from Bacillus subtilis (strain 168).